The following is a 146-amino-acid chain: Hut operon positive regulatory protein (146 aa).

This sequence belongs to the HutP family. As to quaternary structure, homohexamer.

In terms of biological role, antiterminator that binds to cis-acting regulatory sequences on the mRNA in the presence of histidine, thereby suppressing transcription termination and activating the hut operon for histidine utilization. The polypeptide is Hut operon positive regulatory protein (Bacillus anthracis (strain CDC 684 / NRRL 3495)).